The following is a 198-amino-acid chain: Probable septum site-determining protein MinC (198 aa).

The protein belongs to the MinC family. In terms of assembly, interacts with MinD and FtsZ.

Its function is as follows. Cell division inhibitor that blocks the formation of polar Z ring septums. Rapidly oscillates between the poles of the cell to destabilize FtsZ filaments that have formed before they mature into polar Z rings. Prevents FtsZ polymerization. The sequence is that of Probable septum site-determining protein MinC from Thermosipho melanesiensis (strain DSM 12029 / CIP 104789 / BI429).